The following is a 392-amino-acid chain: Probable protein phosphatase 2C 78 (392 aa).

Residues 39-342 form the PPM-type phosphatase domain; the sequence is ASGEYSIAVA…DDITVVVVYL (304 aa). Mn(2+) is bound by residues Asp73, Gly74, Asp274, and Asp333.

It belongs to the PP2C family. Mg(2+) serves as cofactor. It depends on Mn(2+) as a cofactor.

The catalysed reaction is O-phospho-L-seryl-[protein] + H2O = L-seryl-[protein] + phosphate. The enzyme catalyses O-phospho-L-threonyl-[protein] + H2O = L-threonyl-[protein] + phosphate. This is Probable protein phosphatase 2C 78 from Oryza sativa subsp. japonica (Rice).